The chain runs to 483 residues: Putative (R)-citramalate synthase CimA (483 aa).

A Pyruvate carboxyltransferase domain is found at 1–245 (MRDGEQTPGV…DTGIKHEQIY (245 aa)).

This sequence belongs to the alpha-IPM synthase/homocitrate synthase family. Homodimer.

It catalyses the reaction pyruvate + acetyl-CoA + H2O = (3R)-citramalate + CoA + H(+). It functions in the pathway amino-acid biosynthesis; L-isoleucine biosynthesis; 2-oxobutanoate from pyruvate: step 1/3. Catalyzes the condensation of pyruvate and acetyl-coenzyme A to form (R)-citramalate. The chain is Putative (R)-citramalate synthase CimA from Methanosarcina mazei (strain ATCC BAA-159 / DSM 3647 / Goe1 / Go1 / JCM 11833 / OCM 88) (Methanosarcina frisia).